A 410-amino-acid chain; its full sequence is Histidine--tRNA ligase (410 aa).

This sequence belongs to the class-II aminoacyl-tRNA synthetase family.

The protein localises to the cytoplasm. The catalysed reaction is tRNA(His) + L-histidine + ATP = L-histidyl-tRNA(His) + AMP + diphosphate + H(+). This chain is Histidine--tRNA ligase, found in Methanoculleus marisnigri (strain ATCC 35101 / DSM 1498 / JR1).